The primary structure comprises 185 residues: Elongation factor P (185 aa).

It belongs to the elongation factor P family.

The protein localises to the cytoplasm. It participates in protein biosynthesis; polypeptide chain elongation. In terms of biological role, involved in peptide bond synthesis. Stimulates efficient translation and peptide-bond synthesis on native or reconstituted 70S ribosomes in vitro. Probably functions indirectly by altering the affinity of the ribosome for aminoacyl-tRNA, thus increasing their reactivity as acceptors for peptidyl transferase. This Deinococcus deserti (strain DSM 17065 / CIP 109153 / LMG 22923 / VCD115) protein is Elongation factor P.